The primary structure comprises 147 residues: Hemoglobin subunit beta-3 (147 aa).

Positions 2–147 constitute a Globin domain; it reads EWTDAERTAI…VTSALSRQYH (146 aa). Residues His-63 and His-92 each coordinate heme b.

This sequence belongs to the globin family. In terms of assembly, heterotetramer of two alpha chains and two beta chains. As to expression, red blood cells.

Its function is as follows. Involved in oxygen transport from gills to the various peripheral tissues. This chain is Hemoglobin subunit beta-3 (hbb3), found in Muraena helena (Mediterranean moray).